Reading from the N-terminus, the 155-residue chain is uncharacterized protein (155 aa).

An N-terminal signal peptide occupies residues 1-30; sequence MTYNTNTSLSSYAGLSAFALSVFCILWGTA.

This is an uncharacterized protein from Treponema pallidum (strain Nichols).